The chain runs to 304 residues: Virulence protein VirA (304 aa).

In terms of biological role, could be involved in the biosynthesis of a major surface antigen important for virulence. This is Virulence protein VirA (virA) from Vibrio anguillarum (strain ATCC 68554 / 775) (Listonella anguillarum).